The primary structure comprises 288 residues: 4-diphosphocytidyl-2-C-methyl-D-erythritol kinase (288 aa).

K13 is a catalytic residue. 96-106 is a binding site for ATP; sequence PMGGGIGGGSS. D138 is an active-site residue.

This sequence belongs to the GHMP kinase family. IspE subfamily.

The enzyme catalyses 4-CDP-2-C-methyl-D-erythritol + ATP = 4-CDP-2-C-methyl-D-erythritol 2-phosphate + ADP + H(+). The protein operates within isoprenoid biosynthesis; isopentenyl diphosphate biosynthesis via DXP pathway; isopentenyl diphosphate from 1-deoxy-D-xylulose 5-phosphate: step 3/6. Functionally, catalyzes the phosphorylation of the position 2 hydroxy group of 4-diphosphocytidyl-2C-methyl-D-erythritol. The polypeptide is 4-diphosphocytidyl-2-C-methyl-D-erythritol kinase (Aliivibrio fischeri (strain ATCC 700601 / ES114) (Vibrio fischeri)).